The following is a 151-amino-acid chain: Ribosomal RNA large subunit methyltransferase H (151 aa).

Residues glycine 100 and 119 to 124 (LSKMTF) contribute to the S-adenosyl-L-methionine site.

The protein belongs to the RNA methyltransferase RlmH family. As to quaternary structure, homodimer.

The protein resides in the cytoplasm. It carries out the reaction pseudouridine(1915) in 23S rRNA + S-adenosyl-L-methionine = N(3)-methylpseudouridine(1915) in 23S rRNA + S-adenosyl-L-homocysteine + H(+). Functionally, specifically methylates the pseudouridine at position 1915 (m3Psi1915) in 23S rRNA. In Thermotoga sp. (strain RQ2), this protein is Ribosomal RNA large subunit methyltransferase H.